We begin with the raw amino-acid sequence, 274 residues long: Bis(5'-nucleosyl)-tetraphosphatase, symmetrical (274 aa).

Belongs to the Ap4A hydrolase family.

It catalyses the reaction P(1),P(4)-bis(5'-adenosyl) tetraphosphate + H2O = 2 ADP + 2 H(+). In terms of biological role, hydrolyzes diadenosine 5',5'''-P1,P4-tetraphosphate to yield ADP. This chain is Bis(5'-nucleosyl)-tetraphosphatase, symmetrical, found in Shewanella baltica (strain OS195).